Consider the following 425-residue polypeptide: Trigger factor (425 aa).

In terms of domain architecture, PPIase FKBP-type spans 158–231; sequence GDLVRISMEV…VQEVYRRTLP (74 aa).

This sequence belongs to the FKBP-type PPIase family. Tig subfamily.

It localises to the cytoplasm. It catalyses the reaction [protein]-peptidylproline (omega=180) = [protein]-peptidylproline (omega=0). Involved in protein export. Acts as a chaperone by maintaining the newly synthesized protein in an open conformation. Functions as a peptidyl-prolyl cis-trans isomerase. The protein is Trigger factor of Thermotoga neapolitana (strain ATCC 49049 / DSM 4359 / NBRC 107923 / NS-E).